A 148-amino-acid polypeptide reads, in one-letter code: Deoxyuridine 5'-triphosphate nucleotidohydrolase (148 aa).

Substrate contacts are provided by residues 68 to 70 (RSG), asparagine 81, 85 to 87 (TID), and lysine 95.

It belongs to the dUTPase family. Mg(2+) is required as a cofactor.

It carries out the reaction dUTP + H2O = dUMP + diphosphate + H(+). It functions in the pathway pyrimidine metabolism; dUMP biosynthesis; dUMP from dCTP (dUTP route): step 2/2. Functionally, this enzyme is involved in nucleotide metabolism: it produces dUMP, the immediate precursor of thymidine nucleotides and it decreases the intracellular concentration of dUTP so that uracil cannot be incorporated into DNA. The protein is Deoxyuridine 5'-triphosphate nucleotidohydrolase of Rickettsia peacockii (strain Rustic).